Here is a 628-residue protein sequence, read N- to C-terminus: tRNA uridine 5-carboxymethylaminomethyl modification enzyme MnmG (628 aa).

13 to 18 (GAGHAG) contributes to the FAD binding site. An NAD(+)-binding site is contributed by 273–287 (GPRYCPSIEDKIVRF).

It belongs to the MnmG family. In terms of assembly, homodimer. Heterotetramer of two MnmE and two MnmG subunits. FAD is required as a cofactor.

Its subcellular location is the cytoplasm. Functionally, NAD-binding protein involved in the addition of a carboxymethylaminomethyl (cmnm) group at the wobble position (U34) of certain tRNAs, forming tRNA-cmnm(5)s(2)U34. The sequence is that of tRNA uridine 5-carboxymethylaminomethyl modification enzyme MnmG from Buchnera aphidicola subsp. Acyrthosiphon pisum (strain APS) (Acyrthosiphon pisum symbiotic bacterium).